A 104-amino-acid polypeptide reads, in one-letter code: Type VII secretion system extracellular protein B (104 aa).

This sequence belongs to the WXG100 family. In terms of assembly, homodimer. When mixed with EsxA does not form heterodimers. Forms heterodimers with EsxD.

The protein localises to the secreted. In terms of biological role, virulence factor that is important for the establishment of infection in the host. EsxB is required for EsxA synthesis as well as secretion. Mediates together with EsxA the release of S.aureus from the host cell. Also inhibits host cytokine production and thus modulates dendritic cell-mediated immunity. The protein is Type VII secretion system extracellular protein B of Staphylococcus aureus (strain USA300).